Reading from the N-terminus, the 254-residue chain is (2Z,6E)-farnesyl diphosphate synthase (254 aa).

Residue Asp34 is part of the active site. Asp34 contributes to the Mg(2+) binding site. Substrate-binding positions include Gly35 to Arg38, Trp39, His52, and Ser80 to Asp82. The active-site Proton acceptor is the Asn83. Substrate-binding positions include Arg86, Arg203, and Arg209–Ser211. Glu222 provides a ligand contact to Mg(2+).

It belongs to the UPP synthase family. Z-FPP synthase subfamily. As to quaternary structure, homodimer. The cofactor is Mg(2+).

It catalyses the reaction isopentenyl diphosphate + (2E)-geranyl diphosphate = (2Z,6E)-farnesyl diphosphate + diphosphate. Catalyzes the condensation of only one isopentenyl pyrophosphate (IPP) unit in the cis configuration to E-geranyl diphosphate (E-GPP) generating the 15 carbon product (2Z,6E)-farnesyl diphosphate (Z-FPP or EZ-FPP). Only geranyl diphosphate (GPP) can be used as isoprenyl acceptor. The polypeptide is (2Z,6E)-farnesyl diphosphate synthase (Thermobifida fusca (strain YX)).